Consider the following 132-residue polypeptide: Fluoride-specific ion channel FluC 1 (132 aa).

4 consecutive transmembrane segments (helical) span residues 9–29 (LAAV…LSAL), 35–55 (ASWP…VGYF), 72–89 (LLGT…TMQV), and 100–120 (WGLA…AVHL). Na(+) contacts are provided by G79 and T82.

This sequence belongs to the fluoride channel Fluc/FEX (TC 1.A.43) family.

The protein localises to the cell membrane. The enzyme catalyses fluoride(in) = fluoride(out). Its activity is regulated as follows. Na(+) is not transported, but it plays an essential structural role and its presence is essential for fluoride channel function. Functionally, fluoride-specific ion channel. Important for reducing fluoride concentration in the cell, thus reducing its toxicity. The protein is Fluoride-specific ion channel FluC 1 of Mycolicibacterium paratuberculosis (strain ATCC BAA-968 / K-10) (Mycobacterium paratuberculosis).